Here is a 182-residue protein sequence, read N- to C-terminus: Small ribosomal subunit protein uS4c (182 aa).

An S4 RNA-binding domain is found at 82–143 (MRLDNILFRL…KQRSKALIQN (62 aa)).

It belongs to the universal ribosomal protein uS4 family. As to quaternary structure, part of the 30S ribosomal subunit. Contacts protein S5. The interaction surface between S4 and S5 is involved in control of translational fidelity.

It is found in the plastid. The protein localises to the chloroplast. Its function is as follows. One of the primary rRNA binding proteins, it binds directly to 16S rRNA where it nucleates assembly of the body of the 30S subunit. Functionally, with S5 and S12 plays an important role in translational accuracy. This chain is Small ribosomal subunit protein uS4c (rps4), found in Isophysis tasmanica.